We begin with the raw amino-acid sequence, 704 residues long: Plasma membrane ATPase 2 (704 aa).

A helical membrane pass occupies residues 1-16; it reads CSIAVGMIIEIIVMYP. Topologically, residues 17–26 are extracellular; that stretch reads IQHRKYRPGI. Residues 27-48 form a helical membrane-spanning segment; it reads DNLLVLLIGGIPIAMPTVLSVT. The Cytoplasmic segment spans residues 49-395; sequence MAIGSHRLAQ…TSRAIFQRMK (347 aa). Residue Asp-81 is the 4-aspartylphosphate intermediate of the active site. Mg(2+) is bound by residues Asp-340 and Asp-344. Residues 396–417 traverse the membrane as a helical segment; it reads NYTIYAVSITIRIVLGFMLLAL. Over 418–422 the chain is Extracellular; it reads IWKFD. A helical transmembrane segment spans residues 423 to 445; the sequence is FPPFMVLIIAILNDGTIMTISKD. Residues 446–461 are Cytoplasmic-facing; the sequence is RVKPSPLPDSWKLAEI. The helical transmembrane segment at 462–482 threads the bilayer; the sequence is FTTGVVLGGYLAMMTVIFFWA. Residues 483–507 lie on the Extracellular side of the membrane; it reads AYETQFFPRVFGVSTLQRTATDDFR. The helical transmembrane segment at 508-528 threads the bilayer; that stretch reads KLASAIYLQVSTISQALIFVT. The Cytoplasmic portion of the chain corresponds to 529–540; the sequence is RSRSWSFVERPG. The chain crosses the membrane as a helical span at residues 541–561; sequence LLLVVALIVAQLVATLIAVYA. At 562–570 the chain is on the extracellular side; the sequence is SWSFAAIEG. Residues 571–591 traverse the membrane as a helical segment; that stretch reads IGWGWAGVIWLYNLVFYFPLD. At 592-704 the chain is on the cytoplasmic side; it reads IIKFLIRYAL…IETIQQSYTV (113 aa).

This sequence belongs to the cation transport ATPase (P-type) (TC 3.A.3) family. Type IIIA subfamily. In terms of assembly, possibly exists as a homodimer or a homotrimer.

It localises to the cell membrane. It catalyses the reaction ATP + H2O + H(+)(in) = ADP + phosphate + 2 H(+)(out). In terms of biological role, the plasma membrane ATPase of plants and fungi is a hydrogen ion pump. The proton gradient it generates drives the active transport of nutrients by H(+)-symport. The resulting external acidification and/or internal alkinization may mediate growth responses. In Solanum lycopersicum (Tomato), this protein is Plasma membrane ATPase 2 (LHA2).